We begin with the raw amino-acid sequence, 278 residues long: HTH-type transcriptional activator RhaS (278 aa).

The HTH araC/xylS-type domain maps to 174–272; that stretch reads NQLMAWLEDH…NWSPRDIRQG (99 aa). DNA-binding regions (H-T-H motif) lie at residues 191 to 212 and 239 to 262; these read EAVA…KQHT and VTEI…RREF.

In terms of assembly, binds DNA as a dimer.

It localises to the cytoplasm. Its function is as follows. Activates expression of the rhaBAD and rhaT operons. In Salmonella arizonae (strain ATCC BAA-731 / CDC346-86 / RSK2980), this protein is HTH-type transcriptional activator RhaS.